Reading from the N-terminus, the 147-residue chain is MASNTDQASLEQEVRSLQAYANEYSQQFELLTQQLRFIESARGEALASTESLEAFSGLEGDVPTLLNLGGGISVHAIVTDTKKILVGIGAGITVEKPVEEAITFLHDRVTEMDASAKRLSESLGKLQEQMRAVEQRMQEIYSQTQHR.

The protein belongs to the prefoldin alpha subunit family. Heterohexamer of two alpha and four beta subunits.

It is found in the cytoplasm. Molecular chaperone capable of stabilizing a range of proteins. Seems to fulfill an ATP-independent, HSP70-like function in archaeal de novo protein folding. This is Prefoldin subunit alpha from Methanocorpusculum labreanum (strain ATCC 43576 / DSM 4855 / Z).